The sequence spans 394 residues: 3-phenylpropionate/cinnamic acid dioxygenase ferredoxin--NAD(+) reductase component (394 aa).

5 to 36 (TFIIVGAGQAGAMAAATLRQQQFDGDIILIGK) is an FAD binding site. Residue 146–174 (RILIVGGGVIGLELAATSCELGANVTVIE) coordinates NAD(+).

Belongs to the bacterial ring-hydroxylating dioxygenase ferredoxin reductase family. In terms of assembly, this dioxygenase system consists of four proteins: the two subunits of the hydroxylase component (HcaE and HcaF), a ferredoxin (HcaC) and a ferredoxin reductase (HcaD). Requires FAD as cofactor.

The catalysed reaction is 2 reduced [2Fe-2S]-[ferredoxin] + NAD(+) + H(+) = 2 oxidized [2Fe-2S]-[ferredoxin] + NADH. The protein operates within aromatic compound metabolism; 3-phenylpropanoate degradation. Its function is as follows. Part of the multicomponent 3-phenylpropionate dioxygenase, that converts 3-phenylpropionic acid (PP) and cinnamic acid (CI) into 3-phenylpropionate-dihydrodiol (PP-dihydrodiol) and cinnamic acid-dihydrodiol (CI-dihydrodiol), respectively. This chain is 3-phenylpropionate/cinnamic acid dioxygenase ferredoxin--NAD(+) reductase component, found in Photorhabdus laumondii subsp. laumondii (strain DSM 15139 / CIP 105565 / TT01) (Photorhabdus luminescens subsp. laumondii).